Reading from the N-terminus, the 80-residue chain is Cell division topological specificity factor (80 aa).

The protein belongs to the MinE family.

In terms of biological role, prevents the cell division inhibition by proteins MinC and MinD at internal division sites while permitting inhibition at polar sites. This ensures cell division at the proper site by restricting the formation of a division septum at the midpoint of the long axis of the cell. This is Cell division topological specificity factor from Wolinella succinogenes (strain ATCC 29543 / DSM 1740 / CCUG 13145 / JCM 31913 / LMG 7466 / NCTC 11488 / FDC 602W) (Vibrio succinogenes).